A 254-amino-acid chain; its full sequence is Phosphoribosylaminoimidazole-succinocarboxamide synthase (254 aa).

It belongs to the SAICAR synthetase family.

It carries out the reaction 5-amino-1-(5-phospho-D-ribosyl)imidazole-4-carboxylate + L-aspartate + ATP = (2S)-2-[5-amino-1-(5-phospho-beta-D-ribosyl)imidazole-4-carboxamido]succinate + ADP + phosphate + 2 H(+). Its pathway is purine metabolism; IMP biosynthesis via de novo pathway; 5-amino-1-(5-phospho-D-ribosyl)imidazole-4-carboxamide from 5-amino-1-(5-phospho-D-ribosyl)imidazole-4-carboxylate: step 1/2. The chain is Phosphoribosylaminoimidazole-succinocarboxamide synthase from Gluconobacter oxydans (strain 621H) (Gluconobacter suboxydans).